Consider the following 611-residue polypeptide: MQKKTNKNLRNIAIIAHVDHGKTTLVDKLLQQSGTFKKHEEFSERIMDSNDLEKERGITILAKNTAIQWKKYRINIIDTPGHADFGGEVERILSMVDSVLLVVDALEGPMPQTRFVTQKAFSYGIKPIVVINKIDRKHARPNWVIDQIFDLFVNLNATDEQLDFPTIYTSALLGTSGVSYNHMNPDMIPLYNAIVKYTPPPTVYPNCPFQMQISQLDYDNYLGIIGIGRINKGSVTSNQSISIINNTEVKRTGKIGKILQYLGLNKIEINEAQSGDIIAITGIDKLNISDTICDPQYISALPMLKIDEPTVEMLFSVNKSPFSGTEGKYITSRQIFNRLKKEENYNVALKIKETNDTNTFSVSGRGELHLSILIENMRREGFELEVSRPQVILKTINELIQEPMETVVLDIENKYQGTIMKTIGQRKGTISNITPDQNNERTRLDCIISSRSLIGFRTEFSTLTSGSGLFYSTFSHYQKIESNKIKRHRNGVLIANKTGQAIGFSLFNLQNRGKLFITHGTKVYEGQIVGIHNRVNDLTVNCLSGKKLTNMRASGSDEAITLTTPIKMTLEYAISFINDDELVEITPKSIRLRKRYLKENERKILLRNIKE.

Residues 7–202 (KNLRNIAIIA…AIVKYTPPPT (196 aa)) form the tr-type G domain. GTP contacts are provided by residues 19-24 (DHGKTT) and 132-135 (NKID).

Belongs to the TRAFAC class translation factor GTPase superfamily. Classic translation factor GTPase family. BipA subfamily. In terms of assembly, monomer.

It localises to the cytoplasm. The enzyme catalyses GTP + H2O = GDP + phosphate + H(+). Its function is as follows. A 50S ribosomal subunit assembly protein with GTPase activity, required for 50S subunit assembly at low temperatures, may also play a role in translation. Binds GTP and analogs. Binds the 70S ribosome between the 30S and 50S subunits, in a similar position as ribosome-bound EF-G; it contacts a number of ribosomal proteins, both rRNAs and the A-site tRNA. The chain is Large ribosomal subunit assembly factor BipA from Buchnera aphidicola subsp. Baizongia pistaciae (strain Bp).